Reading from the N-terminus, the 192-residue chain is UPF0301 protein Bamb_0737 (192 aa).

The protein belongs to the UPF0301 (AlgH) family.

In Burkholderia ambifaria (strain ATCC BAA-244 / DSM 16087 / CCUG 44356 / LMG 19182 / AMMD) (Burkholderia cepacia (strain AMMD)), this protein is UPF0301 protein Bamb_0737.